Reading from the N-terminus, the 208-residue chain is V-type ATP synthase subunit D (208 aa).

Belongs to the V-ATPase D subunit family.

In terms of biological role, produces ATP from ADP in the presence of a proton gradient across the membrane. The protein is V-type ATP synthase subunit D of Chlamydia caviae (strain ATCC VR-813 / DSM 19441 / 03DC25 / GPIC) (Chlamydophila caviae).